Reading from the N-terminus, the 372-residue chain is Solute carrier family 35 member F6 (372 aa).

A signal peptide spans 1 to 18 (MAWTKYQLFLAGLMLVTG). 2 helical membrane passes run 48 to 68 (FVQA…FYLL) and 89 to 109 (LLFL…YVAL). One can recognise an EamA domain in the interval 105–160 (MYVALNMTSASSFQMLRGAVIIFTGLFSVAFLDRRLVPSQWLGILITIAGLVVVGL). N110 carries N-linked (GlcNAc...) asparagine glycosylation. The next 7 helical transmembrane spans lie at 116 to 136 (SFQM…VAFL), 145 to 165 (WLGI…DLLS), 176 to 196 (VITG…QMVL), 211 to 231 (AVGI…VPMY), 261 to 281 (LIAL…FSGI), 293 to 312 (MVLD…ALGW), and 320 to 336 (ILGF…YNGL). A Phosphothreonine modification is found at T366.

This sequence belongs to the SLC35F solute transporter family. In terms of assembly, interacts with SLC25A5.

Its subcellular location is the mitochondrion. It is found in the lysosome membrane. Involved in the maintenance of mitochondrial membrane potential in pancreatic ductal adenocarcinoma (PDAC) cells. Promotes pancreatic ductal adenocarcinoma (PDAC) cell growth. May play a role as a nucleotide-sugar transporter. This is Solute carrier family 35 member F6 (Slc35f6) from Rattus norvegicus (Rat).